Reading from the N-terminus, the 623-residue chain is Indolepyruvate oxidoreductase subunit IorA (623 aa).

Positions 573, 576, 579, 585, 602, 605, 608, and 612 each coordinate [4Fe-4S] cluster. The 4Fe-4S ferredoxin-type domain maps to 593-622; that stretch reads EKVSIDQSLCVGCAVCAKICPNRAIKPAKS.

As to quaternary structure, heterodimer of the IorA and IorB subunits. [4Fe-4S] cluster is required as a cofactor.

It carries out the reaction indole-3-pyruvate + 2 oxidized [2Fe-2S]-[ferredoxin] + CoA = (indol-3-yl)acetyl-CoA + 2 reduced [2Fe-2S]-[ferredoxin] + CO2 + H(+). In terms of biological role, catalyzes the ferredoxin-dependent oxidative decarboxylation of arylpyruvates. This Archaeoglobus fulgidus (strain ATCC 49558 / DSM 4304 / JCM 9628 / NBRC 100126 / VC-16) protein is Indolepyruvate oxidoreductase subunit IorA (iorA).